The chain runs to 349 residues: Sesquiterpene synthase MAC_05714 (349 aa).

Mg(2+)-binding residues include Asp91 and Asp96. The DDXXXD motif motif lies at Asp91 to Asp96. Residue Arg184 coordinates substrate. Asn230, Ser234, and Glu238 together coordinate Mg(2+).

The protein belongs to the terpene synthase family. Mg(2+) is required as a cofactor.

It carries out the reaction (2E,6E)-farnesyl diphosphate + H2O = (+)-corvol ether B + diphosphate. The enzyme catalyses (2E,6E)-farnesyl diphosphate + H2O = (+)-corvol ether A + diphosphate. Terpene synthase that catalyzes the conversion of (2E,6E)-farnesyl diphosphate (FPP) into sesquiterpenes which are important for fungi-environment interactions. Produces a mixture consisting of 8 sesquiterpenes including corvol ethers A and B, as well as traces of epizonarene, gamma-cadinene, delta-cadinene, alpha-cadinene, alpha-cadinol, and an unidentified sesquiterpene. Produces both corvol ether A and corvol ether B in similar concentrations. The protein is Sesquiterpene synthase MAC_05714 of Metarhizium acridum (strain CQMa 102).